Here is a 413-residue protein sequence, read N- to C-terminus: GDP-mannose-dependent alpha-mannosyltransferase (413 aa).

The protein belongs to the glycosyltransferase group 1 family.

Its pathway is phospholipid metabolism; phosphatidylinositol metabolism. In terms of biological role, catalyzes the addition of a mannose residue from GDP-D-mannose to GlcAGroAc2 to generate 1,2-di-O-C16/C18:1-(alpha-D-mannopyranosyl)-(1-4)-(alpha-D-glucopyranosyluronic acid)-(1-3)-glycerol(ManGlcAGroAc2). The protein is GDP-mannose-dependent alpha-mannosyltransferase (mgtA) of Corynebacterium glutamicum (strain ATCC 13032 / DSM 20300 / JCM 1318 / BCRC 11384 / CCUG 27702 / LMG 3730 / NBRC 12168 / NCIMB 10025 / NRRL B-2784 / 534).